The chain runs to 395 residues: Flap endonuclease 1 (395 aa).

The tract at residues 1–104 is N-domain; that stretch reads MGIKHLYQVI…GELAKRSARK (104 aa). Residue Asp-34 participates in Mg(2+) binding. 2 residues coordinate DNA: Arg-47 and Arg-70. Asp-86 provides a ligand contact to Mg(2+). Positions 99–126 are disordered; the sequence is KRSARKREAHEAHEEAKETGTAEDMEKF. The interval 122–253 is I-domain; the sequence is DMEKFSRRTV…NTALKLIREH (132 aa). Mg(2+)-binding residues include Glu-158, Glu-160, Asp-179, and Asp-181. Glu-158 lines the DNA pocket. Residues Gly-231 and Asp-233 each coordinate DNA. Asp-233 lines the Mg(2+) pocket. Residues 341-349 are interaction with PCNA; sequence QQSRLEGFF. Residues 356-389 show a composition bias toward basic and acidic residues; the sequence is EAEKASLKRKHDEKIEEQKKRKKEEAKAKKEAKA. A disordered region spans residues 356–395; the sequence is EAEKASLKRKHDEKIEEQKKRKKEEAKAKKEAKARPRGAV.

Belongs to the XPG/RAD2 endonuclease family. FEN1 subfamily. Interacts with PCNA. Three molecules of fen1 bind to one PCNA trimer with each molecule binding to one PCNA monomer. PCNA stimulates the nuclease activity without altering cleavage specificity. It depends on Mg(2+) as a cofactor. In terms of processing, phosphorylated. Phosphorylation upon DNA damage induces relocalization to the nuclear plasma.

The protein localises to the nucleus. It is found in the nucleolus. The protein resides in the nucleoplasm. Its subcellular location is the mitochondrion. Functionally, structure-specific nuclease with 5'-flap endonuclease and 5'-3' exonuclease activities involved in DNA replication and repair. During DNA replication, cleaves the 5'-overhanging flap structure that is generated by displacement synthesis when DNA polymerase encounters the 5'-end of a downstream Okazaki fragment. It enters the flap from the 5'-end and then tracks to cleave the flap base, leaving a nick for ligation. Also involved in the long patch base excision repair (LP-BER) pathway, by cleaving within the apurinic/apyrimidinic (AP) site-terminated flap. Acts as a genome stabilization factor that prevents flaps from equilibrating into structures that lead to duplications and deletions. Also possesses 5'-3' exonuclease activity on nicked or gapped double-stranded DNA, and exhibits RNase H activity. Also involved in replication and repair of rDNA and in repairing mitochondrial DNA. The sequence is that of Flap endonuclease 1 (fen1) from Talaromyces stipitatus (strain ATCC 10500 / CBS 375.48 / QM 6759 / NRRL 1006) (Penicillium stipitatum).